The sequence spans 354 residues: Uroporphyrinogen decarboxylase (354 aa).

Residues 27–31 (RQAGR), D77, Y154, T209, and H327 contribute to the substrate site.

The protein belongs to the uroporphyrinogen decarboxylase family. As to quaternary structure, homodimer.

It localises to the cytoplasm. It carries out the reaction uroporphyrinogen III + 4 H(+) = coproporphyrinogen III + 4 CO2. It participates in porphyrin-containing compound metabolism; protoporphyrin-IX biosynthesis; coproporphyrinogen-III from 5-aminolevulinate: step 4/4. Functionally, catalyzes the decarboxylation of four acetate groups of uroporphyrinogen-III to yield coproporphyrinogen-III. This chain is Uroporphyrinogen decarboxylase, found in Pectobacterium carotovorum subsp. carotovorum (strain PC1).